The primary structure comprises 139 residues: Fluoroacetyl-CoA thioesterase (139 aa).

Residues 40–50 (FATGFMVGLME) and glycine 69 each bind substrate. Catalysis depends on residues threonine 42 and glutamate 50. Residues glycine 69 and 76–77 (HT) contribute to the CoA site. Histidine 76 is a catalytic residue. Arginine 120 is a binding site for substrate.

As to quaternary structure, homodimer.

The catalysed reaction is fluoroacetyl-CoA + H2O = fluoroacetate + CoA + H(+). In terms of biological role, hydrolyzes fluoroacetyl-CoA before it can react with citrate synthase, and thus confers fluoroacetate resistance. Cannot use acetyl-CoA as substrate. This is Fluoroacetyl-CoA thioesterase (flK) from Streptantibioticus cattleyicolor (Streptomyces cattleya).